Reading from the N-terminus, the 21-residue chain is Agglutinin beta-1 chain (21 aa).

Positions 1–10 are enriched in polar residues; the sequence is NGPNGKSQSI. The segment at 1 to 21 is disordered; sequence NGPNGKSQSIIVGPWGDRVTN.

The protein belongs to the jacalin lectin family. In terms of assembly, formed of four alpha chains and four beta chains.

In terms of biological role, D-galactose-specific lectin, binds the T-antigen structure Gal-beta1,3-GalNAc. In Maclura pomifera (Osage orange), this protein is Agglutinin beta-1 chain.